Consider the following 34-residue polypeptide: Photosystem II reaction center protein M (34 aa).

A helical transmembrane segment spans residues 5–25; the sequence is ILAFIATALFILIPTAFLLIL.

This sequence belongs to the PsbM family. PSII is composed of 1 copy each of membrane proteins PsbA, PsbB, PsbC, PsbD, PsbE, PsbF, PsbH, PsbI, PsbJ, PsbK, PsbL, PsbM, PsbT, PsbX, PsbY, PsbZ, Psb30/Ycf12, at least 3 peripheral proteins of the oxygen-evolving complex and a large number of cofactors. It forms dimeric complexes.

The protein localises to the plastid. The protein resides in the chloroplast thylakoid membrane. In terms of biological role, one of the components of the core complex of photosystem II (PSII). PSII is a light-driven water:plastoquinone oxidoreductase that uses light energy to abstract electrons from H(2)O, generating O(2) and a proton gradient subsequently used for ATP formation. It consists of a core antenna complex that captures photons, and an electron transfer chain that converts photonic excitation into a charge separation. This subunit is found at the monomer-monomer interface. This Angiopteris evecta (Mule's foot fern) protein is Photosystem II reaction center protein M.